A 131-amino-acid chain; its full sequence is Glycine cleavage system H protein (131 aa).

Positions 24–106 (IATIGISAFA…YGEGWLLKLR (83 aa)) constitute a Lipoyl-binding domain. Lysine 65 is modified (N6-lipoyllysine).

The protein belongs to the GcvH family. The glycine cleavage system is composed of four proteins: P, T, L and H. Requires (R)-lipoate as cofactor.

Functionally, the glycine cleavage system catalyzes the degradation of glycine. The H protein shuttles the methylamine group of glycine from the P protein to the T protein. The chain is Glycine cleavage system H protein from Gloeothece citriformis (strain PCC 7424) (Cyanothece sp. (strain PCC 7424)).